The following is a 261-amino-acid chain: Cytochrome c oxidase subunit 3 (261 aa).

Over 1-15 the chain is Mitochondrial matrix; sequence MTHQTHAYHMVNPSP. A helical transmembrane segment spans residues 16 to 34; that stretch reads WPLTGALSALLMTSGLAMW. Over 35-40 the chain is Mitochondrial intermembrane; sequence FHYNLT. The chain crosses the membrane as a helical span at residues 41-66; it reads LLLTLGMTTNLLTMYQWWRDIIREST. At 67–72 the chain is on the mitochondrial matrix side; sequence FQGHHT. The chain crosses the membrane as a helical span at residues 73-105; that stretch reads PIVQKGLRYGMILFIISEVFFFAGFFWAFYHSS. Residues 106 to 128 are Mitochondrial intermembrane-facing; sequence LAPTPELGGCWPPTGIIPLNPLE. A helical membrane pass occupies residues 129–152; sequence VPLLNTSVLLASGVSITWAHHSLM. The Mitochondrial matrix segment spans residues 153-155; it reads EGN. The helical transmembrane segment at 156 to 183 threads the bilayer; that stretch reads RKHMLQALFITISLGVYFTLLQASEYYE. Residues 184–190 lie on the Mitochondrial intermembrane side of the membrane; sequence TSFTISD. The chain crosses the membrane as a helical span at residues 191–223; that stretch reads GVYGSTFFMATGFHGLHVIIGSTFLIVCFLRQL. The Mitochondrial matrix portion of the chain corresponds to 224 to 232; that stretch reads KYHFTSNHH. Residues 233-256 form a helical membrane-spanning segment; sequence FGFEAAAWYWHFVDVVWLFLYVSI. Topologically, residues 257-261 are mitochondrial intermembrane; it reads YWWGS.

The protein belongs to the cytochrome c oxidase subunit 3 family. In terms of assembly, component of the cytochrome c oxidase (complex IV, CIV), a multisubunit enzyme composed of 14 subunits. The complex is composed of a catalytic core of 3 subunits MT-CO1, MT-CO2 and MT-CO3, encoded in the mitochondrial DNA, and 11 supernumerary subunits COX4I, COX5A, COX5B, COX6A, COX6B, COX6C, COX7A, COX7B, COX7C, COX8 and NDUFA4, which are encoded in the nuclear genome. The complex exists as a monomer or a dimer and forms supercomplexes (SCs) in the inner mitochondrial membrane with NADH-ubiquinone oxidoreductase (complex I, CI) and ubiquinol-cytochrome c oxidoreductase (cytochrome b-c1 complex, complex III, CIII), resulting in different assemblies (supercomplex SCI(1)III(2)IV(1) and megacomplex MCI(2)III(2)IV(2)).

The protein localises to the mitochondrion inner membrane. It catalyses the reaction 4 Fe(II)-[cytochrome c] + O2 + 8 H(+)(in) = 4 Fe(III)-[cytochrome c] + 2 H2O + 4 H(+)(out). In terms of biological role, component of the cytochrome c oxidase, the last enzyme in the mitochondrial electron transport chain which drives oxidative phosphorylation. The respiratory chain contains 3 multisubunit complexes succinate dehydrogenase (complex II, CII), ubiquinol-cytochrome c oxidoreductase (cytochrome b-c1 complex, complex III, CIII) and cytochrome c oxidase (complex IV, CIV), that cooperate to transfer electrons derived from NADH and succinate to molecular oxygen, creating an electrochemical gradient over the inner membrane that drives transmembrane transport and the ATP synthase. Cytochrome c oxidase is the component of the respiratory chain that catalyzes the reduction of oxygen to water. Electrons originating from reduced cytochrome c in the intermembrane space (IMS) are transferred via the dinuclear copper A center (CU(A)) of subunit 2 and heme A of subunit 1 to the active site in subunit 1, a binuclear center (BNC) formed by heme A3 and copper B (CU(B)). The BNC reduces molecular oxygen to 2 water molecules using 4 electrons from cytochrome c in the IMS and 4 protons from the mitochondrial matrix. This is Cytochrome c oxidase subunit 3 (MT-CO3) from Felis catus (Cat).